The sequence spans 38 residues: Photosystem II reaction center protein L (38 aa).

A helical transmembrane segment spans residues 17-37; sequence SLYWGLLLIFVLAVLFSNYFF.

It belongs to the PsbL family. As to quaternary structure, PSII is composed of 1 copy each of membrane proteins PsbA, PsbB, PsbC, PsbD, PsbE, PsbF, PsbH, PsbI, PsbJ, PsbK, PsbL, PsbM, PsbT, PsbX, PsbY, PsbZ, Psb30/Ycf12, at least 3 peripheral proteins of the oxygen-evolving complex and a large number of cofactors. It forms dimeric complexes.

The protein resides in the plastid. The protein localises to the chloroplast thylakoid membrane. One of the components of the core complex of photosystem II (PSII). PSII is a light-driven water:plastoquinone oxidoreductase that uses light energy to abstract electrons from H(2)O, generating O(2) and a proton gradient subsequently used for ATP formation. It consists of a core antenna complex that captures photons, and an electron transfer chain that converts photonic excitation into a charge separation. This subunit is found at the monomer-monomer interface and is required for correct PSII assembly and/or dimerization. The protein is Photosystem II reaction center protein L of Antirrhinum majus (Garden snapdragon).